The following is a 345-amino-acid chain: WD40 repeat protein poxJ (345 aa).

WD repeat units lie at residues 15 to 49 (ANPP…YDVS), 59 to 100 (LFNF…EAQQ), 101 to 146 (VAAH…PLAT), and 250 to 284 (VNDV…RLKS).

The protein belongs to the WD repeat rae1 family.

It functions in the pathway secondary metabolite biosynthesis. Its function is as follows. WD40 repeat protein; part of the gene cluster that mediates the biosynthesis of oxaleimides, cytotoxic compounds containing an unusual disubstituted succinimide moiety. The first step of the pathway is provided by the HR-PKS poxF that serves in a new mode of collaborative biosynthesis with the PKS-NRPS poxE, by providing the olefin containing amino acid substrate via the synthesis of an ACP-bound dec-4-enoate. The cytochrome P450 monooxygenase poxM-catalyzed oxidation at the alpha-position creates the enzyme-bound 2-hydroxydec-4-enoyl-ACP thioester, which may be prone to spontaneous hydrolysis to yield 2-hydroxydec-4-enoic acid due to increased electrophilicity of the carbonyl. 2-hydroxydec-4-enoic acid can then be further oxidized by poxM to yield the alpha-ketoacid 2-oxodec-4-enoicacid, which is reductively aminated by the aminotransferase poxL to yield (S,E)-2-aminodec-4-enoic acid. The Hybrid PKS-NRPS synthetase poxE then performs condensation between the octaketide product of its PKS modules and the amino group of (S,E)-2-aminodec-4-enoic acid which is activated and incorporated by the adenylation domain. The resulting aminoacyl product can be cyclized by the Diels-Alderase PoxQ and reductively released by the reductive (R) domain of poxE to yield an aldehyde intermediate. The released aldehyde is then substrate for a Knoevenagel condensation by the hydrolyase poxO followed by an oxidation at the 5-position of the pyrrolidone ring. The presence of the olefin from the amino acid building block allows for migration of the substituted allyl group to occur. This allylic transposition reaction takes place in a conjugate addition, semipinacol-like fashion to yield a succinimide intermediate. Iterative two-electron oxidations of the C7 methyl of the succinimide intermediate to the carboxylic acid can be catalyzed by one of two remaining cytochrome P450 monooxygenasess poxC or poxD to yield oxaleimide A. Subsequent oxidation yields the maleimide scaffold oxaleimide I. Both oxaleimide A and oxaleimide I can undergo oxidative modifications in the decalin ring to yield the series of products oxaleimides B to H. This is WD40 repeat protein poxJ from Penicillium oxalicum (strain 114-2 / CGMCC 5302) (Penicillium decumbens).